A 102-amino-acid chain; its full sequence is RNA-binding protein Hfq (102 aa).

The region spanning 9-68 (DPFLNALRRERVPVSIYLVNGIKLQGQIESFDQFVILLKNTVSQMVYKHAISTVVPSRPV) is the Sm domain. A disordered region spans residues 64–102 (PSRPVSHHSNTPSGGTSNYHHGNNPSAPQQPQQESDDAE). A compositionally biased stretch (polar residues) spans 70-96 (HHSNTPSGGTSNYHHGNNPSAPQQPQQ).

It belongs to the Hfq family. As to quaternary structure, homohexamer.

RNA chaperone that binds small regulatory RNA (sRNAs) and mRNAs to facilitate mRNA translational regulation in response to envelope stress, environmental stress and changes in metabolite concentrations. Also binds with high specificity to tRNAs. The sequence is that of RNA-binding protein Hfq from Serratia proteamaculans (strain 568).